Consider the following 546-residue polypeptide: Phosphoglucomutase (546 aa).

The active-site Phosphoserine intermediate is the Ser135. The Mg(2+) site is built by Ser135, Asp288, Asp290, and Asp292.

It belongs to the phosphohexose mutase family. Mg(2+) is required as a cofactor.

It catalyses the reaction alpha-D-glucose 1-phosphate = alpha-D-glucose 6-phosphate. Its pathway is glycolipid metabolism; diglucosyl-diacylglycerol biosynthesis. Catalyzes the interconversion between glucose-6-phosphate and alpha-glucose-1-phosphate. This is the first step in the biosynthesis of diglucosyl-diacylglycerol (Glc2-DAG), i.e. a glycolipid found in the membrane, which is also used as a membrane anchor for lipoteichoic acid (LTA). The sequence is that of Phosphoglucomutase (pgcA) from Staphylococcus epidermidis (strain ATCC 35984 / DSM 28319 / BCRC 17069 / CCUG 31568 / BM 3577 / RP62A).